Here is a 612-residue protein sequence, read N- to C-terminus: uncharacterized protein (612 aa).

Residues Ala-213–Arg-238 form a disordered region. Residues Asp-421–Leu-610 form the VWFA domain.

It is found in the cytoplasm. Functionally, component of the anaerobic respiratory chain that transforms nitrate to dinitrogen (denitrification). Function unknown, but essential for the denitrification process. This is an uncharacterized protein from Pseudomonas aeruginosa (strain ATCC 15692 / DSM 22644 / CIP 104116 / JCM 14847 / LMG 12228 / 1C / PRS 101 / PAO1).